Here is a 523-residue protein sequence, read N- to C-terminus: Peptide chain release factor 3 (523 aa).

Residues 8-275 (KKRRTFAIIS…TFLEYAPEPH (268 aa)) form the tr-type G domain. Residues 17-24 (SHPDAGKT), 85-89 (DTPGH), and 139-142 (NKLD) each bind GTP.

This sequence belongs to the TRAFAC class translation factor GTPase superfamily. Classic translation factor GTPase family. PrfC subfamily.

It is found in the cytoplasm. Functionally, increases the formation of ribosomal termination complexes and stimulates activities of RF-1 and RF-2. It binds guanine nucleotides and has strong preference for UGA stop codons. It may interact directly with the ribosome. The stimulation of RF-1 and RF-2 is significantly reduced by GTP and GDP, but not by GMP. The protein is Peptide chain release factor 3 of Lactococcus lactis subsp. cremoris (strain SK11).